Consider the following 361-residue polypeptide: uncharacterized protein (361 aa).

Disordered regions lie at residues 53–75 (KNISNNNNNNNNNNNNVCGNINN) and 150–211 (NYNN…YHHY). Residues 150–198 (NYNNYNNNNNNNNNNNNNNNNNNNNNNNNNNNNNNKNNNKNNNNKPNNF) are compositionally biased toward low complexity. Residues 199 to 211 (IHHHHHHHHYHHY) show a composition bias toward basic residues. Residues 225–245 (IFIGLMAFLILFILMVIGLLI) form a helical membrane-spanning segment.

The protein resides in the membrane. This is an uncharacterized protein from Dictyostelium discoideum (Social amoeba).